The sequence spans 333 residues: MACSRPPSQCDPTTLPPGPPAGRWPLPFSRRRREMSSNKEQRSAVFVILFALITILILYSSNSANEVFHYGSLRGRTRRPVNLKKWSFSSAYFPILGNKTLPSRCNQCVIITSSSHLLGTKLGPEIERAECTIRMNDAPTSGYSADVGNKTTFRVVAHSSVFRVLRKPQEFVNRTPETVFIFWGPPNKMQKPQGSLLRVIQRAGLMFPNMEAYAVSPARMQQFDDLFRGETGKDREKSHSWLSTGWFTMVIAVELCDHVHVYGMVPPDYCSQRPRLQRMPYHYYEPKGPDECVTYIQNEHSRKGNHHRFITEKRVFSSWAQLYGITFSHPSWT.

Over residues M1–P12 the composition is skewed to polar residues. Residues M1–P27 form a disordered region. Residues M1–S43 lie on the Cytoplasmic side of the membrane. The chain crosses the membrane as a helical; Signal-anchor for type II membrane protein span at residues A44–A64. The Lumenal portion of the chain corresponds to N65–T333. N-linked (GlcNAc...) asparagine glycosylation is present at N98. Cysteines 108 and 256 form a disulfide.

It belongs to the glycosyltransferase 29 family. Widely expressed, the gene expression is most abundant in colon, brain, liver, and heart.

The protein resides in the golgi apparatus membrane. The catalysed reaction is a ganglioside GM1b (d18:1(4E)) + CMP-N-acetyl-beta-neuraminate = a ganglioside GD1alpha (d18:1(4E)) + CMP + H(+). It catalyses the reaction a ganglioside GD1a (d18:1(4E)) + CMP-N-acetyl-beta-neuraminate = a ganglioside GT1aalpha (d18:1(4E)) + CMP + H(+). The enzyme catalyses a ganglioside GT1b (d18:1(4E)) + CMP-N-acetyl-beta-neuraminate = a ganglioside GQ1balpha (d18:1(4E)) + CMP + H(+). It carries out the reaction N-acetyl-alpha-neuraminosyl-(2-&gt;3)-beta-D-galactosyl-(1-&gt;3)-N-acetyl-beta-D-glucosaminyl-(1-&gt;3)-beta-D-galactosyl-(1-&gt;4)-beta-D-glucosyl-(1&lt;-&gt;1')-N-acyl-sphing-4-enine + CMP-N-acetyl-beta-neuraminate = N-acetyl-alpha-neuraminosyl-(2-&gt;3)-beta-D-galactosyl-(1-&gt;3)-[N-acetyl-alpha-neuraminosyl-(2-&gt;6)]-N-acetyl-beta-D-glucosaminyl-(1-&gt;3)-beta-D-galactosyl-(1-&gt;4)-beta-D-glucosyl-(1&lt;-&gt;1')-N-acyl-sphing-4-enine + CMP + H(+). The catalysed reaction is a globoside MSGG + CMP-N-acetyl-beta-neuraminate = a globoside DSGG + CMP + H(+). It catalyses the reaction 3-O-[alpha-Neu5Ac-(2-&gt;3)-beta-D-Gal-(1-&gt;3)-alpha-D-GalNAc]-L-Ser-[protein] + CMP-N-acetyl-beta-neuraminate = a 3-O-{alpha-Neu5Ac-(2-&gt;3)-beta-D-Gal-(1-&gt;3)-[alpha-Neu5Ac-(2-&gt;6)]-alpha-D-GalNAc}-L-seryl-[protein] + CMP + H(+). The enzyme catalyses 3-O-[alpha-Neu5Ac-(2-&gt;3)-beta-D-Gal-(1-&gt;3)-alpha-D-GalNAc]-L-Thr-[protein] + CMP-N-acetyl-beta-neuraminate = a 3-O-{alpha-Neu5Ac-(2-&gt;3)-beta-D-Gal-(1-&gt;3)-[alpha-Neu5Ac-(2-&gt;6)]-alpha-D-GalNAc}-L-threonyl-[protein] + CMP + H(+). Functionally, transfers the sialyl group (N-acetyl-alpha-neuraminyl or NeuAc) from CMP-NeuAc onto glycolipids, forming an alpha-2,6-linkage. Produces branched type disialyl structures by transfer of a sialyl group onto the GalNAc or GlcNAc residue inside backbone core chains having a terminal sialic acid with an alpha-2,3-linkage on Gal. ST6GalNAcVI prefers glycolipids to glycoproteins, predominantly catalyzing the biosynthesis of ganglioside GD1alpha from GM1b. Also has activity toward GD1a and GT1b, and can generate DSGG (disialylgalactosylgloboside) from MSGG (monosialylgalactosylgloboside). Besides GMb1, MSGG and other glycolipids, it shows activity towards sialyl Lc4Cer generating disialyl Lc4Cer, which can lead to the synthesis of disialyl Lewis a (Le(a)), suggested to be a cancer-associated antigen. This chain is Alpha-N-acetylgalactosaminide alpha-2,6-sialyltransferase 6 (St6galnac6), found in Mus musculus (Mouse).